A 673-amino-acid polypeptide reads, in one-letter code: Thimet-like oligopeptidase (673 aa).

His465 provides a ligand contact to Zn(2+). Glu466 is an active-site residue. Zn(2+) contacts are provided by His469 and His472.

The protein belongs to the peptidase M3 family. Requires Zn(2+) as cofactor.

The polypeptide is Thimet-like oligopeptidase (Dictyostelium discoideum (Social amoeba)).